Consider the following 323-residue polypeptide: Prostaglandin F synthase 1 (323 aa).

NADP(+) contacts are provided by residues 20 to 24 (GFGTY) and aspartate 50. Catalysis depends on tyrosine 55, which acts as the Proton donor. Histidine 117 contacts substrate. NADP(+) contacts are provided by residues 166-167 (SN), glutamine 190, 216-221 (YAALGA), and 270-280 (KSFNKKRIKEN).

It belongs to the aldo/keto reductase family. As to quaternary structure, monomer. Post-translationally, the N-terminus is blocked.

Its subcellular location is the cytoplasm. The catalysed reaction is prostaglandin F2alpha + NADP(+) = prostaglandin D2 + NADPH + H(+). The protein operates within lipid metabolism; prostaglandin biosynthesis. Functionally, catalyzes the reduction of PGD(2) and PGH(2) to PGF(2 alpha) and a stereoisomer, respectively. It has a broad substrate specificity and also reduces other carbonyl compounds. The protein is Prostaglandin F synthase 1 of Bos taurus (Bovine).